Reading from the N-terminus, the 244-residue chain is Proteasome subunit alpha (244 aa).

Belongs to the peptidase T1A family. As to quaternary structure, the 20S proteasome core is composed of 14 alpha and 14 beta subunits that assemble into four stacked heptameric rings, resulting in a barrel-shaped structure. The two inner rings, each composed of seven catalytic beta subunits, are sandwiched by two outer rings, each composed of seven alpha subunits. The catalytic chamber with the active sites is on the inside of the barrel. Has a gated structure, the ends of the cylinder being occluded by the N-termini of the alpha-subunits. Is capped by the proteasome-associated ATPase, ARC.

The protein localises to the cytoplasm. The protein operates within protein degradation; proteasomal Pup-dependent pathway. Its activity is regulated as follows. The formation of the proteasomal ATPase ARC-20S proteasome complex, likely via the docking of the C-termini of ARC into the intersubunit pockets in the alpha-rings, may trigger opening of the gate for substrate entry. Interconversion between the open-gate and close-gate conformations leads to a dynamic regulation of the 20S proteasome proteolysis activity. Functionally, component of the proteasome core, a large protease complex with broad specificity involved in protein degradation. The protein is Proteasome subunit alpha of Xylanimonas cellulosilytica (strain DSM 15894 / JCM 12276 / CECT 5975 / KCTC 9989 / LMG 20990 / NBRC 107835 / XIL07).